Reading from the N-terminus, the 153-residue chain is Arginine repressor (153 aa).

It belongs to the ArgR family.

It is found in the cytoplasm. It participates in amino-acid biosynthesis; L-arginine biosynthesis [regulation]. In terms of biological role, regulates arginine biosynthesis genes. This Actinobacillus pleuropneumoniae serotype 7 (strain AP76) protein is Arginine repressor.